We begin with the raw amino-acid sequence, 329 residues long: NADH-quinone oxidoreductase subunit H 2 (329 aa).

Transmembrane regions (helical) follow at residues 12–32, 78–98, 120–140, 159–179, 191–211, 242–262, 270–290, and 309–329; these read GAKIALIFFVVLTLAAYLVFA, WLFYLAPAMAAVPAILTFAVI, VGLLFFLALSSIAVYGVALGG, LISYELSMGLSLVPTVMLAGS, GVWFIAYQPVAFLIFLISIAA, LFFVGEYINIIVLGGLATTFF, LLPPFVWFSVKTLAFAFFFIW, and KVLTPLALLNILITGWVLMFV.

The protein belongs to the complex I subunit 1 family. As to quaternary structure, NDH-1 is composed of 14 different subunits. Subunits NuoA, H, J, K, L, M, N constitute the membrane sector of the complex.

The protein localises to the cell inner membrane. The enzyme catalyses a quinone + NADH + 5 H(+)(in) = a quinol + NAD(+) + 4 H(+)(out). NDH-1 shuttles electrons from NADH, via FMN and iron-sulfur (Fe-S) centers, to quinones in the respiratory chain. The immediate electron acceptor for the enzyme in this species is believed to be ubiquinone. Couples the redox reaction to proton translocation (for every two electrons transferred, four hydrogen ions are translocated across the cytoplasmic membrane), and thus conserves the redox energy in a proton gradient. This subunit may bind ubiquinone. In Geobacter sulfurreducens (strain ATCC 51573 / DSM 12127 / PCA), this protein is NADH-quinone oxidoreductase subunit H 2.